Consider the following 649-residue polypeptide: DNA mismatch repair protein MutL (649 aa).

This sequence belongs to the DNA mismatch repair MutL/HexB family.

Functionally, this protein is involved in the repair of mismatches in DNA. It is required for dam-dependent methyl-directed DNA mismatch repair. May act as a 'molecular matchmaker', a protein that promotes the formation of a stable complex between two or more DNA-binding proteins in an ATP-dependent manner without itself being part of a final effector complex. The chain is DNA mismatch repair protein MutL from Streptococcus pneumoniae serotype 19F (strain G54).